The following is a 476-amino-acid chain: Glutamyl-tRNA(Gln) amidotransferase subunit A (476 aa).

Active-site charge relay system residues include lysine 76 and serine 151. Residue serine 175 is the Acyl-ester intermediate of the active site.

It belongs to the amidase family. GatA subfamily. In terms of assembly, heterotrimer of A, B and C subunits.

The catalysed reaction is L-glutamyl-tRNA(Gln) + L-glutamine + ATP + H2O = L-glutaminyl-tRNA(Gln) + L-glutamate + ADP + phosphate + H(+). In terms of biological role, allows the formation of correctly charged Gln-tRNA(Gln) through the transamidation of misacylated Glu-tRNA(Gln) in organisms which lack glutaminyl-tRNA synthetase. The reaction takes place in the presence of glutamine and ATP through an activated gamma-phospho-Glu-tRNA(Gln). This chain is Glutamyl-tRNA(Gln) amidotransferase subunit A, found in Chlorobium phaeobacteroides (strain DSM 266 / SMG 266 / 2430).